Reading from the N-terminus, the 230-residue chain is Endonuclease NucS (230 aa).

This sequence belongs to the NucS endonuclease family.

Its subcellular location is the cytoplasm. In terms of biological role, cleaves both 3' and 5' ssDNA extremities of branched DNA structures. The protein is Endonuclease NucS of Corynebacterium glutamicum (strain R).